Reading from the N-terminus, the 196-residue chain is Carnitine operon protein CaiE (196 aa).

Residues 173 to 196 (TQPLRQMEGNRPRLQGTTDVAPKR) are disordered.

This sequence belongs to the transferase hexapeptide repeat family.

The protein operates within amine and polyamine metabolism; carnitine metabolism. Its function is as follows. Overproduction of CaiE stimulates the activity of CaiB and CaiD. In Escherichia coli (strain SMS-3-5 / SECEC), this protein is Carnitine operon protein CaiE.